We begin with the raw amino-acid sequence, 57 residues long: Large ribosomal subunit protein bL32 (57 aa).

Residues 1 to 20 form a disordered region; sequence MAVQQRRVSKSRKGMRRSHD. The segment covering 7–19 has biased composition (basic residues); that stretch reads RVSKSRKGMRRSH.

This sequence belongs to the bacterial ribosomal protein bL32 family.

The chain is Large ribosomal subunit protein bL32 from Ureaplasma urealyticum serovar 10 (strain ATCC 33699 / Western).